Reading from the N-terminus, the 370-residue chain is Transcription factor E2F2 (370 aa).

The disordered stretch occupies residues 1–73 (MYKRKTASIV…QSQSQPGQQR (73 aa)). The segment covering 15–26 (SAAGTTSSAMMM) has biased composition (low complexity). A compositionally biased stretch (polar residues) spans 31–49 (AETSVRSQSYESTPVSMDT). The segment covering 59–73 (SPSNSQSQSQPGQQR) has biased composition (low complexity). A DNA-binding region spans residues 72–137 (QRSVGSLVLL…GRHCSLVRWR (66 aa)). The tract at residues 137 to 226 (RGGGFNNAKD…VDIKRNHYEL (90 aa)) is dimerization.

Belongs to the E2F/DP family. As to quaternary structure, forms a heterodimer with Dp. Interacts with Rbf/Rbf1 and Rbf2. Component of the DREAM complex, which is at least composed of Myb, Caf1-55, mip40, mip120, mip130, E2f2, Dp, Rbf, Rbf2, lin-52, HDAC1/Rpd3 and l(3)mbt. In terms of tissue distribution, ubiquitously expressed in eye disk.

It localises to the nucleus. In terms of biological role, transcriptional repressor that binds to E2f sites and represses E2f-regulated target genes. Binding to E2f sites requires transcription factor Dp. Acts synergistically with Rbf2 to antagonize E2f1-mediated transcriptional activation. Component of the DREAM complex, a multiprotein complex that can both act as a transcription activator or repressor depending on the context. The DREAM complex is required for recruiting E2f2 at differentiation-specific promoters and for stabilizing E2f2-Rbf complexes during S phase. During development, the complex represses transcription of developmentally controlled E2f target genes. During oogenesis, plays a role in restricting DNA synthesis to sites of chorion gene amplification in late stage ovarian follicle cells. Plays an inhibitory role in ionizing radiation (IR)-induced p53-independent apoptosis. May be involved in cell cycle exit by temporarily limiting CycE-dependent activation of E2f-regulated transcription. In Drosophila melanogaster (Fruit fly), this protein is Transcription factor E2F2 (E2f2).